The following is a 128-amino-acid chain: Iron-sulfur cluster insertion protein ErpA (128 aa).

Residues Cys56, Cys120, and Cys122 each coordinate iron-sulfur cluster.

It belongs to the HesB/IscA family. As to quaternary structure, homodimer. The cofactor is iron-sulfur cluster.

Its function is as follows. Required for insertion of 4Fe-4S clusters for at least IspG. The protein is Iron-sulfur cluster insertion protein ErpA of Xanthomonas axonopodis pv. citri (strain 306).